The sequence spans 1066 residues: Hemoglobin and hemoglobin-haptoglobin-binding protein C (1066 aa).

Residues 1–24 form the signal peptide; that stretch reads MTNFKFTLLARSIAFALNASTAYA. 7 tandem repeats follow at residues 26–29, 30–33, 34–37, 38–41, 42–45, 46–49, and 50–53. The interval 26–53 is 7 X 4 AA tandem repeats of Q-P-T-N; sequence QPTNQPTNQPTNQPTNQPTNQPTNQPTN. The span at 26-54 shows a compositional bias: low complexity; sequence QPTNQPTNQPTNQPTNQPTNQPTNQPTNQ. Positions 26 to 57 are disordered; sequence QPTNQPTNQPTNQPTNQPTNQPTNQPTNQDSN. Positions 63–70 match the TonB box motif; the sequence is EQINVSGS. One can recognise a TBDR plug domain in the interval 66 to 200; that stretch reads NVSGSTETIN…LGGSVIFETK (135 aa). The 859-residue stretch at 208-1066 folds into the TBDR beta-barrel domain; that stretch reads DKDYYVSYKR…NYRMSVQFEF (859 aa). The TonB C-terminal box motif lies at 1049 to 1066; that stretch reads NRLYAPGRNYRMSVQFEF.

This sequence belongs to the TonB-dependent receptor family. Hemoglobin/haptoglobin binding protein subfamily.

It is found in the cell outer membrane. Its function is as follows. Acts as a receptor for hemoglobin or the hemoglobin/haptoglobin complex of the human host and is required for heme uptake. This chain is Hemoglobin and hemoglobin-haptoglobin-binding protein C (hgpC), found in Haemophilus influenzae.